We begin with the raw amino-acid sequence, 415 residues long: S-inosyl-L-homocysteine hydrolase (415 aa).

Residues Asp-123 and Glu-148 each contribute to the substrate site. 149–151 provides a ligand contact to NAD(+); that stretch reads TTT. Positions 178 and 182 each coordinate substrate. NAD(+)-binding positions include Asn-183, 212 to 217, Glu-235, 291 to 293, and Asn-337; these read GYGWCG and AGH.

It belongs to the adenosylhomocysteinase family. As to quaternary structure, exists both as a homotetramer and a homodimer, in a 4:1 ratio. NAD(+) is required as a cofactor.

It localises to the cytoplasm. The catalysed reaction is S-inosyl-L-homocysteine + H2O = L-homocysteine + inosine. Its pathway is amino-acid biosynthesis; S-adenosyl-L-methionine biosynthesis. Catalyzes the hydrolysis of S-inosyl-L-homocysteine (SIH) to L-homocysteine (Hcy) and inosine. Likely functions in a S-adenosyl-L-methionine (SAM) recycling pathway from S-adenosyl-L-homocysteine (SAH) produced from SAM-dependent methylation reactions. Can also catalyze the reverse reaction in vitro, i.e. the synthesis of SIH from Hcy and inosine. Is specific for SIH and inosine as it is unable to either hydrolyze SAH or synthesize SAH from adenosine and Hcy. The sequence is that of S-inosyl-L-homocysteine hydrolase from Methanocaldococcus jannaschii (strain ATCC 43067 / DSM 2661 / JAL-1 / JCM 10045 / NBRC 100440) (Methanococcus jannaschii).